The following is a 284-amino-acid chain: Aliphatic sulfonates import ATP-binding protein SsuB (284 aa).

An ABC transporter domain is found at 21–242; it reads LRIAHAVKRY…HRGAPAFARL (222 aa). 53–60 is a binding site for ATP; sequence GRSGCGKS.

The protein belongs to the ABC transporter superfamily. Aliphatic sulfonates importer (TC 3.A.1.17.2) family. In terms of assembly, the complex is composed of two ATP-binding proteins (SsuB), two transmembrane proteins (SsuC) and a solute-binding protein (SsuA).

The protein localises to the cell inner membrane. The enzyme catalyses ATP + H2O + aliphatic sulfonate-[sulfonate-binding protein]Side 1 = ADP + phosphate + aliphatic sulfonateSide 2 + [sulfonate-binding protein]Side 1.. Its function is as follows. Part of the ABC transporter complex SsuABC involved in aliphatic sulfonates import. Responsible for energy coupling to the transport system. In Ralstonia nicotianae (strain ATCC BAA-1114 / GMI1000) (Ralstonia solanacearum), this protein is Aliphatic sulfonates import ATP-binding protein SsuB.